We begin with the raw amino-acid sequence, 443 residues long: ATP-dependent protease ATPase subunit HslU (443 aa).

Residues Ile18 and 60 to 65 (GVGKTE) contribute to the ATP site. The segment at 142–162 (LGFEASPSEESNATRQKFRKK) is disordered. ATP-binding residues include Asp256, Glu321, and Arg393.

The protein belongs to the ClpX chaperone family. HslU subfamily. A double ring-shaped homohexamer of HslV is capped on each side by a ring-shaped HslU homohexamer. The assembly of the HslU/HslV complex is dependent on binding of ATP.

The protein resides in the cytoplasm. Its function is as follows. ATPase subunit of a proteasome-like degradation complex; this subunit has chaperone activity. The binding of ATP and its subsequent hydrolysis by HslU are essential for unfolding of protein substrates subsequently hydrolyzed by HslV. HslU recognizes the N-terminal part of its protein substrates and unfolds these before they are guided to HslV for hydrolysis. This is ATP-dependent protease ATPase subunit HslU from Nitrosomonas europaea (strain ATCC 19718 / CIP 103999 / KCTC 2705 / NBRC 14298).